The chain runs to 380 residues: MAKRDYYEILGVAKSADEREIKKAYKRLAMKFHPDRNQGDKESEGKFKEIKEAYEILTDGQKRAAYDQYGHAAFEQGGMGGGGHGGFGGGGADFSDIFGDVFGDIFGGGRRQQRAARGADLRYNMELTLEEAVRGVSKEIRIPTLEECGVCHGSGAKAGTKPQTCSTCHGAGQVQMRQGFFTVQQACPTCHGRGSVIKDPCNACHGHGRVEKSKTLSVKIPAGVDTGDRIRLSGEGEAGEQGAPAGDLYVQVQVRKHHIFEREENNLYCEVPINFVMAALGGEIEVPTLDGRVNLKVPAETQTGKLFRMRGKGVKSVRGGAQGDLLCRVVVETPVSLNEKQKTLLRELDESFGGPSGEKNSPRSKTFFDGVKKFFDDLTR.

Residues D5–G70 enclose the J domain. The segment at G135–S213 adopts a CR-type zinc-finger fold. Residues C148, C151, C165, C168, C187, C190, C201, and C204 each coordinate Zn(2+). 4 CXXCXGXG motif repeats span residues C148–G155, C165–G172, C187–G194, and C201–G208.

This sequence belongs to the DnaJ family. Homodimer. Requires Zn(2+) as cofactor.

It is found in the cytoplasm. Functionally, participates actively in the response to hyperosmotic and heat shock by preventing the aggregation of stress-denatured proteins and by disaggregating proteins, also in an autonomous, DnaK-independent fashion. Unfolded proteins bind initially to DnaJ; upon interaction with the DnaJ-bound protein, DnaK hydrolyzes its bound ATP, resulting in the formation of a stable complex. GrpE releases ADP from DnaK; ATP binding to DnaK triggers the release of the substrate protein, thus completing the reaction cycle. Several rounds of ATP-dependent interactions between DnaJ, DnaK and GrpE are required for fully efficient folding. Also involved, together with DnaK and GrpE, in the DNA replication of plasmids through activation of initiation proteins. The polypeptide is Chaperone protein DnaJ (Erwinia tasmaniensis (strain DSM 17950 / CFBP 7177 / CIP 109463 / NCPPB 4357 / Et1/99)).